The sequence spans 442 residues: Tubby-related protein 3 (442 aa).

Residues 23-68 (MRQAKLDYQRLLLEKRQRKKRLEPFMVQPNPEARLRRAKPRASDEQ) are required for association with the IFT complex A (IFT-A). A disordered region spans residues 101–177 (PSVSSSVVEE…TSGSATAAQP (77 aa)). Residues 145-162 (GISQSACLERPNSASSQN) show a composition bias toward polar residues. Residues 163 to 175 (STDTGTSGSATAA) are compositionally biased toward low complexity.

Belongs to the TUB family. As to quaternary structure, associates with the IFT complex A (IFT-A). Interacts with SIRT1. As to expression, expressed at high levels in testis, ovaries, thyroid, and spinal cord.

The protein resides in the nucleus. It is found in the cell membrane. Its subcellular location is the cell projection. The protein localises to the cilium. It localises to the cytoplasm. The protein resides in the secreted. Its function is as follows. Negative regulator of the Shh signaling transduction pathway: recruited to primary cilia via association with the IFT complex A (IFT-A) and is required for recruitment of G protein-coupled receptor GPR161 to cilia, a promoter of PKA-dependent basal repression machinery in Shh signaling. Binds to phosphorylated inositide (phosphoinositide) lipids. Both IFT-A- and phosphoinositide-binding properties are required to regulate ciliary G protein-coupled receptor trafficking. During adipogenesis, regulates ciliary trafficking of FFAR4 in preadipocytes. The sequence is that of Tubby-related protein 3 from Homo sapiens (Human).